The following is a 291-amino-acid chain: Methylsterol monooxygenase 1 (291 aa).

2 consecutive transmembrane segments (helical) span residues Leu-55–Leu-75 and Met-100–Thr-120. Residues Cys-145 to Thr-274 form the Fatty acid hydroxylase domain. The Histidine box-1 motif lies at His-157–His-161. Residues His-170–His-174 carry the Histidine box-2 motif. Residues Phe-199–Phe-219 traverse the membrane as a helical segment. The Histidine box-3 signature appears at Phe-249–Met-255.

It belongs to the sterol desaturase family. Requires Fe cation as cofactor.

The protein localises to the endoplasmic reticulum membrane. The enzyme catalyses 4,4-dimethyl-5alpha-cholest-7-en-3beta-ol + 6 Fe(II)-[cytochrome b5] + 3 O2 + 5 H(+) = 4alpha-carboxy-4beta-methyl-5alpha-cholest-7-ene-3beta-ol + 6 Fe(III)-[cytochrome b5] + 4 H2O. It participates in steroid biosynthesis; zymosterol biosynthesis; zymosterol from lanosterol: step 3/6. In terms of biological role, catalyzes the first step in the removal of the two C-4 methyl groups of 4,4-dimethylzymosterol. The chain is Methylsterol monooxygenase 1 (msmo1) from Danio rerio (Zebrafish).